The following is a 141-amino-acid chain: Hemoglobin subunit alpha (141 aa).

Residues 1–141 (VLSSTDKSNV…VSTVLTSKYR (141 aa)) form the Globin domain. The residue at position 3 (S3) is a Phosphoserine. K7 and K11 each carry N6-succinyllysine. K16 carries the N6-acetyllysine; alternate modification. N6-succinyllysine; alternate is present on K16. Phosphotyrosine is present on Y24. At S35 the chain carries Phosphoserine. K40 is subject to N6-succinyllysine. Position 58 (H58) interacts with O2. Heme b is bound at residue H87. S102 carries the post-translational modification Phosphoserine. T108 carries the post-translational modification Phosphothreonine. Residues S124 and S131 each carry the phosphoserine modification. A phosphothreonine mark is found at T134 and T137. At S138 the chain carries Phosphoserine.

This sequence belongs to the globin family. Heterotetramer of two alpha chains and two beta chains. Red blood cells.

Its function is as follows. Involved in oxygen transport from the lung to the various peripheral tissues. Hemopressin acts as an antagonist peptide of the cannabinoid receptor CNR1. Hemopressin-binding efficiently blocks cannabinoid receptor CNR1 and subsequent signaling. In Pteropus poliocephalus (Grey-headed flying fox), this protein is Hemoglobin subunit alpha (HBA).